Consider the following 233-residue polypeptide: Aspartate/glutamate leucyltransferase (233 aa).

The protein belongs to the R-transferase family. Bpt subfamily.

Its subcellular location is the cytoplasm. The enzyme catalyses N-terminal L-glutamyl-[protein] + L-leucyl-tRNA(Leu) = N-terminal L-leucyl-L-glutamyl-[protein] + tRNA(Leu) + H(+). It catalyses the reaction N-terminal L-aspartyl-[protein] + L-leucyl-tRNA(Leu) = N-terminal L-leucyl-L-aspartyl-[protein] + tRNA(Leu) + H(+). In terms of biological role, functions in the N-end rule pathway of protein degradation where it conjugates Leu from its aminoacyl-tRNA to the N-termini of proteins containing an N-terminal aspartate or glutamate. The chain is Aspartate/glutamate leucyltransferase from Vibrio cholerae serotype O1 (strain ATCC 39315 / El Tor Inaba N16961).